A 418-amino-acid chain; its full sequence is Somatostatin receptor type 3 (418 aa).

Residues 1–21 form a disordered region; the sequence is MDMLHPSSVSTTSEPENASSA. The Extracellular segment spans residues 1–43; the sequence is MDMLHPSSVSTTSEPENASSAWPPDATLGNVSAGPSPAGLAVS. Residues 7–20 show a composition bias toward polar residues; sequence SSVSTTSEPENASS. 2 N-linked (GlcNAc...) asparagine glycosylation sites follow: Asn17 and Asn30. A helical transmembrane segment spans residues 44–69; it reads GVLIPLVYLVVCVVGLLGNSLVIYVV. Residues 70–79 lie on the Cytoplasmic side of the membrane; that stretch reads LRHTASPSVT. Residues 80 to 101 traverse the membrane as a helical segment; that stretch reads NVYILNLALADELFMLGLPFLA. Topologically, residues 102–116 are extracellular; the sequence is AQNALSYWPFGSLMC. A disulfide bridge connects residues Cys116 and Cys191. The chain crosses the membrane as a helical span at residues 117–138; sequence RLVMAVDGINQFTSIFCLTVMS. Topologically, residues 139 to 161 are cytoplasmic; it reads VDRYLAVVHPTRSARWRTAPVAR. A helical membrane pass occupies residues 162–181; the sequence is TVSAAVWVASAVVVLPVVVF. Residues 182 to 205 are Extracellular-facing; sequence SGVPRGMSTCHMQWPEPAAAWRAG. Residues 206 to 231 traverse the membrane as a helical segment; the sequence is FIIYTAALGFFGPLLVICLCYLLIVV. At 232–257 the chain is on the cytoplasmic side; that stretch reads KVRSAGRRVWAPSCQRRRRSERRVTR. A helical membrane pass occupies residues 258 to 279; sequence MVVAVVALFVLCWMPFYVLNIV. Residues 280 to 293 are Extracellular-facing; that stretch reads NVVCPLPEEPAFFG. A helical transmembrane segment spans residues 294–316; the sequence is LYFLVVALPYANSCANPILYGFL. Residues 317-418 are Cytoplasmic-facing; sequence SYRFKQGFRR…KSSTMRISYL (102 aa). 2 positions are modified to phosphoserine: Ser332 and Ser337. Residues 335–418 are disordered; that stretch reads VRSQEPTVGP…KSSTMRISYL (84 aa). A Phosphothreonine modification is found at Thr348. Over residues 348-360 the composition is skewed to acidic residues; it reads TEEEDEEEEDGEE. Over residues 361 to 371 the composition is skewed to basic and acidic residues; the sequence is SREGGKGKEMN. Polar residues-rich tracts occupy residues 373–385 and 395–418; these read RVSQITQPGTSGQ and KEQQLLPQEASTGEKSSTMRISYL.

Belongs to the G-protein coupled receptor 1 family. Homodimer and heterodimer with SSTR2. Heterodimerization with SSTR2 inactivates SSTR3 receptor function. In terms of processing, phosphorylated. Phosphorylation increases upon somatostatin binding. As to expression, brain, pituitary and pancreas.

The protein localises to the cell membrane. Its function is as follows. Receptor for somatostatin-14 and -28. This receptor is coupled via pertussis toxin sensitive G proteins to inhibition of adenylyl cyclase. In Homo sapiens (Human), this protein is Somatostatin receptor type 3 (SSTR3).